The primary structure comprises 865 residues: Probable beta-glucosidase J (865 aa).

Residue Asp-233 is part of the active site. Asn-330, Asn-447, Asn-503, and Asn-764 each carry an N-linked (GlcNAc...) asparagine glycan. The PA14 domain maps to 411–579; the sequence is TGQPGYTFRV…DTDTAIQQAV (169 aa).

It belongs to the glycosyl hydrolase 3 family.

The protein localises to the secreted. The catalysed reaction is Hydrolysis of terminal, non-reducing beta-D-glucosyl residues with release of beta-D-glucose.. It functions in the pathway glycan metabolism; cellulose degradation. In terms of biological role, beta-glucosidases are one of a number of cellulolytic enzymes involved in the degradation of cellulosic biomass. Catalyzes the last step releasing glucose from the inhibitory cellobiose. This chain is Probable beta-glucosidase J (bglJ), found in Aspergillus fumigatus (strain CBS 144.89 / FGSC A1163 / CEA10) (Neosartorya fumigata).